We begin with the raw amino-acid sequence, 341 residues long: tRNA N6-adenosine threonylcarbamoyltransferase (341 aa).

Fe cation is bound by residues H111 and H115. Residues 134–138 (LVSGG), D167, G180, and N270 contribute to the substrate site. D298 is a binding site for Fe cation.

This sequence belongs to the KAE1 / TsaD family. Requires Fe(2+) as cofactor.

It is found in the cytoplasm. The catalysed reaction is L-threonylcarbamoyladenylate + adenosine(37) in tRNA = N(6)-L-threonylcarbamoyladenosine(37) in tRNA + AMP + H(+). In terms of biological role, required for the formation of a threonylcarbamoyl group on adenosine at position 37 (t(6)A37) in tRNAs that read codons beginning with adenine. Is involved in the transfer of the threonylcarbamoyl moiety of threonylcarbamoyl-AMP (TC-AMP) to the N6 group of A37, together with TsaE and TsaB. TsaD likely plays a direct catalytic role in this reaction. The polypeptide is tRNA N6-adenosine threonylcarbamoyltransferase (Thiobacillus denitrificans (strain ATCC 25259 / T1)).